A 198-amino-acid chain; its full sequence is Ciliary neurotrophic factor (198 aa).

It belongs to the CNTF family. As to expression, nervous system.

Its subcellular location is the cytoplasm. Functionally, CNTF is a survival factor for various neuronal cell types. Seems to prevent the degeneration of motor axons after axotomy. This Mus musculus (Mouse) protein is Ciliary neurotrophic factor (Cntf).